A 63-amino-acid chain; its full sequence is Small ribosomal subunit protein eS30B (63 aa).

A disordered region spans residues 1–35 (MAKVHGSLARAGKVKSQTPKVEKTEKPKKPKGRAY). The residue at position 16 (serine 16) is a Phosphoserine. Threonine 48 is modified (phosphothreonine).

Belongs to the eukaryotic ribosomal protein eS30 family. In terms of assembly, component of the small ribosomal subunit (SSU). Mature yeast ribosomes consist of a small (40S) and a large (60S) subunit. The 40S small subunit contains 1 molecule of ribosomal RNA (18S rRNA) and 33 different proteins (encoded by 57 genes). The large 60S subunit contains 3 rRNA molecules (25S, 5.8S and 5S rRNA) and 46 different proteins (encoded by 81 genes).

It localises to the cytoplasm. Its function is as follows. Component of the ribosome, a large ribonucleoprotein complex responsible for the synthesis of proteins in the cell. The small ribosomal subunit (SSU) binds messenger RNAs (mRNAs) and translates the encoded message by selecting cognate aminoacyl-transfer RNA (tRNA) molecules. The large subunit (LSU) contains the ribosomal catalytic site termed the peptidyl transferase center (PTC), which catalyzes the formation of peptide bonds, thereby polymerizing the amino acids delivered by tRNAs into a polypeptide chain. The nascent polypeptides leave the ribosome through a tunnel in the LSU and interact with protein factors that function in enzymatic processing, targeting, and the membrane insertion of nascent chains at the exit of the ribosomal tunnel. This is Small ribosomal subunit protein eS30B from Saccharomyces cerevisiae (strain ATCC 204508 / S288c) (Baker's yeast).